A 275-amino-acid polypeptide reads, in one-letter code: NH(3)-dependent NAD(+) synthetase (275 aa).

46-53 (GISGGQDS) provides a ligand contact to ATP. Asp-52 serves as a coordination point for Mg(2+). Arg-140 is a deamido-NAD(+) binding site. Thr-160 contacts ATP. A Mg(2+)-binding site is contributed by Glu-165. Deamido-NAD(+) is bound by residues Lys-173 and Asp-180. Residues Lys-189 and Thr-211 each contribute to the ATP site. A deamido-NAD(+)-binding site is contributed by 260–261 (HK).

Belongs to the NAD synthetase family. In terms of assembly, homodimer.

The enzyme catalyses deamido-NAD(+) + NH4(+) + ATP = AMP + diphosphate + NAD(+) + H(+). The protein operates within cofactor biosynthesis; NAD(+) biosynthesis; NAD(+) from deamido-NAD(+) (ammonia route): step 1/1. Functionally, catalyzes the ATP-dependent amidation of deamido-NAD to form NAD. Uses ammonia as a nitrogen source. In Salmonella typhi, this protein is NH(3)-dependent NAD(+) synthetase.